We begin with the raw amino-acid sequence, 175 residues long: Alpha-crystallin B chain (175 aa).

Met-1 bears the N-acetylmethionine mark. Ser-19, Ser-45, and Ser-59 each carry phosphoserine. A sHSP domain is found at 56-164; the sequence is RAPSWIDTGL…PERTIPITRE (109 aa). A Zn(2+)-binding site is contributed by His-83. Lys-92 bears the N6-acetyllysine mark. Zn(2+)-binding residues include His-104, Glu-106, His-111, and His-119. A disordered region spans residues 142–175; the sequence is VLTVNGPRKQASGPERTIPITREEKPAVTAAPKK. Residue Lys-166 is modified to N6-acetyllysine. Residue Thr-170 is glycosylated (O-linked (GlcNAc) threonine).

It belongs to the small heat shock protein (HSP20) family. In terms of assembly, heteromer composed of three CRYAA and one CRYAB subunits. Aggregates with homologous proteins, including the small heat shock protein HSPB1, to form large heteromeric complexes. Inter-subunit bridging via zinc ions enhances stability, which is crucial as there is no protein turn over in the lens. Interacts with HSPBAP1. Interacts with TTN/titin. Interacts with TMEM109; in the cellular response to DNA damage. Interacts with DES; binds rapidly during early stages of DES filament assembly and a reduced binding seen in the later stages. Interacts with TMED10; the interaction mediates the translocation from the cytoplasm into the ERGIC (endoplasmic reticulum-Golgi intermediate compartment) and thereby secretion. Interacts with ATP6V1A and with MTOR, forming a ternary complex. As to expression, lens as well as other tissues.

It localises to the cytoplasm. It is found in the nucleus. Its subcellular location is the secreted. The protein localises to the lysosome. May contribute to the transparency and refractive index of the lens. Has chaperone-like activity, preventing aggregation of various proteins under a wide range of stress conditions. In lens epithelial cells, stabilizes the ATP6V1A protein, preventing its degradation by the proteasome. The protein is Alpha-crystallin B chain of Rattus norvegicus (Rat).